A 342-amino-acid polypeptide reads, in one-letter code: MQQLMTLLSPPLSHSSLLPTVTTKFGSPRLVTTCMGHAGRKNIKDKVVLITGTTGTGKSRLSVDLATRFFPAEIINSDKMQIYKGFEIVTNLIPLHEQGGVPHHLLGQFHPQDGELTPAEFRSLATLSISKLISSKKLPIVVGGSNSFNHALLAERFDPDIDPFSPGSSLSTICSDLRYKCCILWVDVLEPVLFQHLCNRVDQMIESGLVEQLAELYDPVVDSGRRLGVRKTIGVEEFDRYFRVYPKEMDKGIWDLARKAAYEETVKGMKERTCRLVKKQKEKIMKLIRGGWEIKRLDATAAIMAELNQSTAKGEGKNGREIWEKHIVDESVEIVKKFLLEV.

The transit peptide at 1–33 (MQQLMTLLSPPLSHSSLLPTVTTKFGSPRLVTT) directs the protein to the chloroplast. Residue 52 to 59 (GTTGTGKS) participates in ATP binding.

It belongs to the IPP transferase family. In terms of tissue distribution, expressed in siliques, at the mRNA level.

Its subcellular location is the plastid. It localises to the chloroplast. It catalyses the reaction dimethylallyl diphosphate + ADP = N(6)-(dimethylallyl)adenosine 5'-diphosphate + diphosphate. It carries out the reaction dimethylallyl diphosphate + ATP = N(6)-(dimethylallyl)adenosine 5'-triphosphate + diphosphate. Its function is as follows. Involved in cytokinin biosynthesis. Catalyzes the transfer of an isopentenyl group from dimethylallyl diphosphate (DMAPP) to ATP and ADP. The protein is Adenylate isopentenyltransferase 6, chloroplastic (IPT6) of Arabidopsis thaliana (Mouse-ear cress).